Here is a 105-residue protein sequence, read N- to C-terminus: uncharacterized protein (105 aa).

A disordered region spans residues 1-27 (MSLKSWHPQSKTKRVGASEGNPQWGSG).

This is an uncharacterized protein from Homo sapiens (Human).